The primary structure comprises 95 residues: Aspartyl/glutamyl-tRNA(Asn/Gln) amidotransferase subunit C (95 aa).

Belongs to the GatC family. As to quaternary structure, heterotrimer of A, B and C subunits.

The enzyme catalyses L-glutamyl-tRNA(Gln) + L-glutamine + ATP + H2O = L-glutaminyl-tRNA(Gln) + L-glutamate + ADP + phosphate + H(+). The catalysed reaction is L-aspartyl-tRNA(Asn) + L-glutamine + ATP + H2O = L-asparaginyl-tRNA(Asn) + L-glutamate + ADP + phosphate + 2 H(+). In terms of biological role, allows the formation of correctly charged Asn-tRNA(Asn) or Gln-tRNA(Gln) through the transamidation of misacylated Asp-tRNA(Asn) or Glu-tRNA(Gln) in organisms which lack either or both of asparaginyl-tRNA or glutaminyl-tRNA synthetases. The reaction takes place in the presence of glutamine and ATP through an activated phospho-Asp-tRNA(Asn) or phospho-Glu-tRNA(Gln). The protein is Aspartyl/glutamyl-tRNA(Asn/Gln) amidotransferase subunit C of Pseudomonas fluorescens (strain SBW25).